Reading from the N-terminus, the 335-residue chain is NmrA-like family domain-containing oxidoreductase lnbB (335 aa).

Residues 14–18 (GTGNQ), 41–45 (RHPDS), 62–63 (DG), 83–85 (TNS), Lys-142, and 166–169 (YYEQ) contribute to the NADP(+) site.

It belongs to the NmrA-type oxidoreductase family.

Its pathway is secondary metabolite biosynthesis. NmrA-like family domain-containing oxidoreductase; part of the lnb gene cluster that mediates the biosynthesis of diastereomeric piperazines. Lna and lnb clusters encode sets of enzymes that produce overlapping sets of previously undescribed metabolites such as piperazinomycin-like metabolites or morpholine. The lna and lnb biosynthetic pathways appear to be part of a signaling network that controls the formation of sclerotia, a resilient overwintering structure. One primary function of the non-canonical nonribosomal peptide synthetases lnaA and lnbA consists in the reduction of L-tyrosine. The presence in the clusters of tailoring enzymes such as the oxidoreductases lnaB, lnbB, lnaE or lnbE, as well as of the cytochrome P450 monooxygenases lnaC, lnaD, or lnbC, might explain formation of various diastereomeric piperazines. This Aspergillus flavus (strain ATCC 200026 / FGSC A1120 / IAM 13836 / NRRL 3357 / JCM 12722 / SRRC 167) protein is NmrA-like family domain-containing oxidoreductase lnbB.